Reading from the N-terminus, the 747-residue chain is Endoglucanase D (747 aa).

The N-terminal stretch at 1–39 (MHSASRTRARTRVRTAVSGLLAATVLAAPLTLVAAPAQA) is a signal peptide. Residue E208 is the Proton donor of the active site. The active-site Nucleophile is the E349. The segment at 456–475 (APTGLRAGTPTASTVPLTWS) is disordered. Fibronectin type-III domains follow at residues 456–543 (APTG…TAAG) and 552–639 (VPTG…TAPD). A compositionally biased stretch (polar residues) spans 465–475 (PTASTVPLTWS). In terms of domain architecture, CBM2 spans 638–747 (PDPTTGSCAV…TVGGATCTTR (110 aa)).

The protein belongs to the glycosyl hydrolase 5 (cellulase A) family.

The catalysed reaction is Endohydrolysis of (1-&gt;4)-beta-D-glucosidic linkages in cellulose, lichenin and cereal beta-D-glucans.. It functions in the pathway glycan metabolism; cellulose degradation. The sequence is that of Endoglucanase D (cenD) from Cellulomonas fimi.